Here is a 171-residue protein sequence, read N- to C-terminus: Cardioactive peptide (171 aa).

The first 26 residues, 1-26 (MQMYHVVLGCSLAILLVILDIPQASC), serve as a signal peptide directing secretion. A propeptide spanning residues 27–49 (DDVVIQKRQVDPAEMDRLLDPKR) is cleaved from the precursor. A disulfide bridge connects residues Cys54 and Cys60. Cysteine amide is present on Cys60. Residues 64-171 (RSDESMGTLV…QEEITKPWSR (108 aa)) constitute a propeptide that is removed on maturation. The disordered stretch occupies residues 116–171 (QSNQFGAGMDRPLPLPIAGYRRKRFADPESQAPAPHSNLPRATSQLQEEITKPWSR).

Central nervous system; most neurons exhibit coexpression with burs.

Its subcellular location is the secreted. Its function is as follows. Cardioregulatory neurohormone that increases heart beat rate during adult wing inflation; has no effect on beat amplitude. The effect of CCAP is both ino- and chronotropic. This Periplaneta americana (American cockroach) protein is Cardioactive peptide.